Consider the following 303-residue polypeptide: Probable cell division protein WhiA (303 aa).

The H-T-H motif DNA-binding region spans 272–303 (SIQQVADALEFPITKSGVNHRLRKINKIADDL).

This sequence belongs to the WhiA family.

In terms of biological role, involved in cell division and chromosome segregation. The protein is Probable cell division protein WhiA of Streptococcus pyogenes serotype M6 (strain ATCC BAA-946 / MGAS10394).